A 155-amino-acid polypeptide reads, in one-letter code: Molybdopterin synthase catalytic subunit (155 aa).

Substrate contacts are provided by residues 109 to 110 (HR), Lys125, and 132 to 134 (KKE).

The protein belongs to the MoaE family. MOCS2B subfamily. As to quaternary structure, heterotetramer; composed of 2 small (MOCS2A) and 2 large (MOCS2B) subunits.

The protein localises to the cytoplasm. It localises to the cytosol. It catalyses the reaction 2 [molybdopterin-synthase sulfur-carrier protein]-C-terminal-Gly-aminoethanethioate + cyclic pyranopterin phosphate + H2O = molybdopterin + 2 [molybdopterin-synthase sulfur-carrier protein]-C-terminal Gly-Gly + 2 H(+). The protein operates within cofactor biosynthesis; molybdopterin biosynthesis. Functionally, catalytic subunit of the molybdopterin synthase complex, a complex that catalyzes the conversion of precursor Z into molybdopterin. Acts by mediating the incorporation of 2 sulfur atoms from thiocarboxylated MOCS2A into precursor Z to generate a dithiolene group. This is Molybdopterin synthase catalytic subunit from Taeniopygia guttata (Zebra finch).